A 118-amino-acid chain; its full sequence is Cell division protein FtsB (118 aa).

Residues 1–3 (MRL) lie on the Cytoplasmic side of the membrane. A helical transmembrane segment spans residues 4-21 (LFLVLLVLLGLIQYPLWL). Over 22–118 (GKGGWFKVWD…PRPPATPPRR (97 aa)) the chain is Periplasmic. Residues 28-62 (KVWDLQRQVAEQRETNDGLRARNTALEAEVRDLAT) adopt a coiled-coil conformation. Residues 88-118 (LPPGTPLPSGNSTPQASALSKPRPPATPPRR) form a disordered region. Residues 95–105 (PSGNSTPQASA) show a composition bias toward polar residues. Positions 109–118 (PRPPATPPRR) are enriched in pro residues.

This sequence belongs to the FtsB family. As to quaternary structure, part of a complex composed of FtsB, FtsL and FtsQ.

It is found in the cell inner membrane. Essential cell division protein. May link together the upstream cell division proteins, which are predominantly cytoplasmic, with the downstream cell division proteins, which are predominantly periplasmic. This Bordetella parapertussis (strain 12822 / ATCC BAA-587 / NCTC 13253) protein is Cell division protein FtsB.